The following is a 303-amino-acid chain: tRNA pseudouridine synthase B (303 aa).

Catalysis depends on Asp-53, which acts as the Nucleophile.

The protein belongs to the pseudouridine synthase TruB family. Type 1 subfamily.

The catalysed reaction is uridine(55) in tRNA = pseudouridine(55) in tRNA. Functionally, responsible for synthesis of pseudouridine from uracil-55 in the psi GC loop of transfer RNAs. This is tRNA pseudouridine synthase B from Zymomonas mobilis subsp. mobilis (strain ATCC 31821 / ZM4 / CP4).